We begin with the raw amino-acid sequence, 484 residues long: NADH-quinone oxidoreductase subunit N (484 aa).

A run of 13 helical transmembrane segments spans residues 10–30, 40–60, 74–94, 108–128, 129–149, 163–183, 203–223, 237–257, 272–292, 299–319, 327–347, 370–390, and 404–424; these read LALP…VDLF, FYLT…TQWG, SLGA…LAYT, FYLL…GGSL, LSLY…VAYH, FVLG…VYGA, LMLL…LGAA, PTPV…ALFM, EPML…IAIV, MLAY…TAGT, LFYT…ITVL, YAGV…TVGF, and GHIP…FYYL.

This sequence belongs to the complex I subunit 2 family. As to quaternary structure, NDH-1 is composed of 14 different subunits. Subunits NuoA, H, J, K, L, M, N constitute the membrane sector of the complex.

The protein localises to the cell inner membrane. It carries out the reaction a quinone + NADH + 5 H(+)(in) = a quinol + NAD(+) + 4 H(+)(out). In terms of biological role, NDH-1 shuttles electrons from NADH, via FMN and iron-sulfur (Fe-S) centers, to quinones in the respiratory chain. The immediate electron acceptor for the enzyme in this species is believed to be ubiquinone. Couples the redox reaction to proton translocation (for every two electrons transferred, four hydrogen ions are translocated across the cytoplasmic membrane), and thus conserves the redox energy in a proton gradient. This Halorhodospira halophila (strain DSM 244 / SL1) (Ectothiorhodospira halophila (strain DSM 244 / SL1)) protein is NADH-quinone oxidoreductase subunit N.